A 156-amino-acid polypeptide reads, in one-letter code: Acyl carrier protein, mitochondrial (156 aa).

A mitochondrion-targeting transit peptide spans 1–68 (MASRVLCACV…GTVTHLCRQY (68 aa)). In terms of domain architecture, Carrier spans 77–152 (DGIKDRVLYV…EIVDYIADKK (76 aa)). An N6-acetyllysine modification is found at lysine 88. At serine 112 the chain carries O-(pantetheine 4'-phosphoryl)serine.

This sequence belongs to the acyl carrier protein (ACP) family. Mammalian complex I is composed of 45 different subunits. Interacts with ETFRF1. Identified in a complex composed of MALSU1, MIEF1 upstream open reading frame protein and NDUFAB1; within the trimeric complex, MIEF1 upstream open reading frame protein functions as a bridging scaffold that interacts with MALSU1 on one side, and with NDUFAB1 on the other side. The complex interacts with the mitochondrial large ribosomal subunit. Interacts with alpha-1-microglobulin chain; this interaction is required for the maintenance of mitochondrial redox homeostasis. Component of the mitochondrial core iron-sulfur cluster (ISC) complex composed of NFS1, LYRM4, NDUFAB1, ISCU, FXN, and FDX2; this complex is a heterohexamer containing two copies of each monomer. Component of the cyteine desulfurase complex composed of NFS1, LYRM4 and NDUFAB1; this complex contributes to the stability and cysteine desulfurase activity of NFS1. Post-translationally, phosphopantetheinylation at Ser-112 is essential for interactions with LYR motif-containing proteins.

The protein localises to the mitochondrion. Its function is as follows. Carrier of the growing fatty acid chain in fatty acid biosynthesis. Accessory and non-catalytic subunit of the mitochondrial membrane respiratory chain NADH dehydrogenase (Complex I), which functions in the transfer of electrons from NADH to the respiratory chain. Accessory protein, of the core iron-sulfur cluster (ISC) assembly complex, that regulates, in association with LYRM4, the stability and the cysteine desulfurase activity of NFS1 and participates in the [2Fe-2S] clusters assembly on the scaffolding protein ISCU. The core iron-sulfur cluster (ISC) assembly complex is involved in the de novo synthesis of a [2Fe-2S] cluster, the first step of the mitochondrial iron-sulfur protein biogenesis. This process is initiated by the cysteine desulfurase complex (NFS1:LYRM4:NDUFAB1) that produces persulfide which is delivered on the scaffold protein ISCU in a FXN-dependent manner. Then this complex is stabilized by FDX2 which provides reducing equivalents to accomplish the [2Fe-2S] cluster assembly. Finally, the [2Fe-2S] cluster is transferred from ISCU to chaperone proteins, including HSCB, HSPA9 and GLRX5. The protein is Acyl carrier protein, mitochondrial of Mus musculus (Mouse).